The primary structure comprises 360 residues: Viral protein TPX (360 aa).

The interval 269-289 is disordered; the sequence is TVTPISSPSPTPTPTPTPTPT. A Thr-Pro(N) repeat occupies 270-291; it reads VTPISSPSPTPTPTPTPTPTPT. A compositionally biased stretch (pro residues) spans 275–289; that stretch reads SPSPTPTPTPTPTPT. The segment at 278–353 is 3 Thr-Pro repeats regions and two near identical repeats; that stretch reads PTPTPTPTPT…PTPTPTPTPT (76 aa). Positions 292-301 form a repeat; the sequence is YDITYVVFDV. The Thr-Pro(N) repeat unit spans residues 302–322; it reads TPSPTPTPTLTSTPTPTPTPT. A repeat spans 323–332; it reads YDITYVIFDV. Residues 332–360 are disordered; it reads VTPSPTPTPTPTPTPTPTPTPTSTTSSNI. The Thr-Pro(N) repeat unit spans residues 333–353; the sequence is TPSPTPTPTPTPTPTPTPTPT. The segment covering 335–351 has biased composition (pro residues); it reads SPTPTPTPTPTPTPTPT.

The polypeptide is Viral protein TPX (Thermoproteus tenax (TTV1)).